The sequence spans 77 residues: Small, acid-soluble spore protein Tlp (77 aa).

This sequence belongs to the Tlp family.

The protein resides in the spore core. This Geobacillus sp. (strain WCH70) protein is Small, acid-soluble spore protein Tlp.